A 342-amino-acid chain; its full sequence is Glycerol-1-phosphate dehydrogenase [NAD(P)+] (342 aa).

NAD(+)-binding positions include 84-88 (GRPID) and 106-109 (TSAS). Residue Asp111 participates in substrate binding. Ser115 serves as a coordination point for NAD(+). Position 160 (Asp160) interacts with substrate. 2 residues coordinate Zn(2+): Asp160 and His241. His245 serves as a coordination point for substrate. His260 lines the Zn(2+) pocket.

Belongs to the glycerol-1-phosphate dehydrogenase family. As to quaternary structure, homodimer. Requires Zn(2+) as cofactor.

It is found in the cytoplasm. It catalyses the reaction sn-glycerol 1-phosphate + NAD(+) = dihydroxyacetone phosphate + NADH + H(+). The enzyme catalyses sn-glycerol 1-phosphate + NADP(+) = dihydroxyacetone phosphate + NADPH + H(+). The protein operates within membrane lipid metabolism; glycerophospholipid metabolism. Functionally, catalyzes the NAD(P)H-dependent reduction of dihydroxyacetonephosphate (DHAP or glycerone phosphate) to glycerol 1-phosphate (G1P). The G1P thus generated is used as the glycerophosphate backbone of phospholipids in the cellular membranes of Archaea. The sequence is that of Glycerol-1-phosphate dehydrogenase [NAD(P)+] from Pyrobaculum islandicum (strain DSM 4184 / JCM 9189 / GEO3).